Here is a 352-residue protein sequence, read N- to C-terminus: MHFLDQAKIFIRSGQGGPGAVSFRREKYVEYGGPDGGDGGKGGDIIFEAVTGLNTLIDFRYAQHFKAQRGHGGAGKNRTGAGGNDLVIKVPVGTQVLDDDRETVLLDLTEAGQREILLRGGDGGRGNASYKTSTNRAPRQHGPGWPGEEMYVWLRLKLLADAGLVGLPNAGKSTFINQITNTKAKVGDYAFTTLRPQLGVVRHRNREFVLADIPGLIEGAADGAGIGDRFLGHIERCRVLIHLIDIHSDVDPVEAMHIVEGELEAYGAGLDEKPRLVALNKIDLVDKELVKAFQDELLEGGADRVFPISGATGKGMDALLDAVLEYLPAATVTERPTGEVEEAEDQKPWSPI.

The 159-residue stretch at 1 to 159 folds into the Obg domain; it reads MHFLDQAKIF…MYVWLRLKLL (159 aa). Positions 122 to 142 are disordered; the sequence is DGGRGNASYKTSTNRAPRQHG. The OBG-type G domain maps to 160-328; the sequence is ADAGLVGLPN…LLDAVLEYLP (169 aa). GTP contacts are provided by residues 166–173, 191–195, 212–215, 280–283, and 309–311; these read GLPNAGKS, FTTLR, DIPG, NKID, and SGA. Residues Ser173 and Thr193 each contribute to the Mg(2+) site.

The protein belongs to the TRAFAC class OBG-HflX-like GTPase superfamily. OBG GTPase family. In terms of assembly, monomer. Requires Mg(2+) as cofactor.

The protein resides in the cytoplasm. Its function is as follows. An essential GTPase which binds GTP, GDP and possibly (p)ppGpp with moderate affinity, with high nucleotide exchange rates and a fairly low GTP hydrolysis rate. Plays a role in control of the cell cycle, stress response, ribosome biogenesis and in those bacteria that undergo differentiation, in morphogenesis control. In Novosphingobium aromaticivorans (strain ATCC 700278 / DSM 12444 / CCUG 56034 / CIP 105152 / NBRC 16084 / F199), this protein is GTPase Obg.